We begin with the raw amino-acid sequence, 1225 residues long: Catenin delta-2 (1225 aa).

4 disordered regions span residues Met-1 to Ile-51, Ser-87 to Leu-117, Ser-134 to Asp-242, and Ser-256 to Ser-312. 2 stretches are compositionally biased toward polar residues: residues Gln-20 to Ile-51 and Ala-98 to Asp-108. Residues Ser-49–Lys-84 adopt a coiled-coil conformation. The span at Ser-149–Ser-160 shows a compositional bias: low complexity. Composition is skewed to polar residues over residues Tyr-172–Gln-187 and Ala-195–Arg-209. Arg-209 is modified (omega-N-methylarginine). A compositionally biased stretch (pro residues) spans Glu-217–Pro-229. Position 264 is an omega-N-methylarginine (Arg-264). A phosphoserine mark is found at Ser-267 and Ser-276. Arg-282 and Arg-296 each carry omega-N-methylarginine. The span at Ser-299 to Ser-312 shows a compositional bias: polar residues. Phosphoserine occurs at positions 327, 360, 415, and 461. An ARM 1 repeat occupies Gly-394–Ser-438. Disordered stretches follow at residues Pro-432–Ala-483 and Ser-514–Pro-542. Positions Leu-469 to Pro-478 are enriched in polar residues. Ser-514 is subject to Phosphoserine. Position 516 is a phosphotyrosine (Tyr-516). ARM repeat units lie at residues Lys-540–Phe-579, Asn-582–Tyr-621, Asp-626–Ser-666, Leu-682–Ser-724, Glu-728–Tyr-773, Pro-835–Ala-875, Val-882–Leu-921, and Met-975–Gln-1018. The disordered stretch occupies residues Thr-1042–Pro-1077. Residues Pro-1050 to Ile-1059 show a composition bias toward polar residues. Phosphoserine is present on residues Ser-1065 and Ser-1076. The segment covering Ser-1065 to Pro-1077 has biased composition (low complexity).

It belongs to the beta-catenin family. As to quaternary structure, binds to E-cadherin at a juxtamembrane site within the cytoplasmic domain. Interacts with PDZD2. Interacts with ZBTB33. Binds to PSEN1. Interacts with ARHGEF28. Interacts (via the extreme C-terminus) with FRMPD2 (via the PDZ 2 domain). Interacts with CDK5. Interacts with CTNNB1. Interacts with GSK3A and GSK3B. Interacts with DNM2. Interacts with CCDC85B. In terms of processing, O-glycosylated. Post-translationally, phosphorylated by CDK5. Phosphorylated by GSK3B. As to expression, expressed in brain; highest expression is observed in fetal brain.

The protein resides in the nucleus. Its subcellular location is the cell junction. The protein localises to the adherens junction. It is found in the cell projection. It localises to the dendrite. The protein resides in the perikaryon. Its function is as follows. Has a critical role in neuronal development, particularly in the formation and/or maintenance of dendritic spines and synapses. Involved in the regulation of Wnt signaling. It probably acts on beta-catenin turnover, facilitating beta-catenin interaction with GSK3B, phosphorylation, ubiquitination and degradation. Functions as a transcriptional activator when bound to ZBTB33. May be involved in neuronal cell adhesion and tissue morphogenesis and integrity by regulating adhesion molecules. The polypeptide is Catenin delta-2 (CTNND2) (Homo sapiens (Human)).